The primary structure comprises 510 residues: Cobyric acid synthase (510 aa).

The GATase cobBQ-type domain occupies 249-458 (CFKVRVLVYP…LHGLFDSPDA (210 aa)). Cys336 functions as the Nucleophile in the catalytic mechanism. The active site involves His450.

This sequence belongs to the CobB/CobQ family. CobQ subfamily.

It functions in the pathway cofactor biosynthesis; adenosylcobalamin biosynthesis. In terms of biological role, catalyzes amidations at positions B, D, E, and G on adenosylcobyrinic A,C-diamide. NH(2) groups are provided by glutamine, and one molecule of ATP is hydrogenolyzed for each amidation. The protein is Cobyric acid synthase of Shewanella oneidensis (strain ATCC 700550 / JCM 31522 / CIP 106686 / LMG 19005 / NCIMB 14063 / MR-1).